Here is a 637-residue protein sequence, read N- to C-terminus: Pentatricopeptide repeat-containing protein At1g12300, mitochondrial (637 aa).

A mitochondrion-targeting transit peptide spans 1–95 (MVKLMIRRLS…PTVIDFSRLF (95 aa)). PPR repeat units lie at residues 87-121 (TVID…GIAH), 122-156 (NLYT…GYEP), 157-191 (NTIT…GHKP), 192-226 (DLIT…GCQP), 227-261 (NAVT…NIKL), 262-296 (DAVK…GITT), 297-331 (NIIT…KINP), 332-366 (NVVT…GIAP), 367-401 (DTIT…GCDP), 402-436 (NIRT…GVVA), 437-471 (DTVT…KVPP), 472-506 (NIVT…KMEL), 507-541 (DIGI…GVKP), 542-576 (GVKT…GHAP), and 577-611 (DGWT…GFSV).

Belongs to the PPR family. P subfamily.

It is found in the mitochondrion. This chain is Pentatricopeptide repeat-containing protein At1g12300, mitochondrial, found in Arabidopsis thaliana (Mouse-ear cress).